Here is a 286-residue protein sequence, read N- to C-terminus: MSTVLRLAIQKSGRLSEESIKLIKECGIEFSSGGGTLKSVAYNFPLEVLFLRDDDIPGYVADGVADIGIVGENVAVETRKKMDTVRQLGFSKCRLSIGVPKAMEFTGKESLNGMRIATSYPNILSDYLFENNIKASIHEISGSVEIAPGIGLADAICDIVSSGSTLISNGLKETEVVFRSEAILAACPQLSAEKKAILDELMFRISAVKNAEKTKYIMLNVPDHAIQTVTALLPGVKSPTVMPLAEKGWSSLHSVVKESDFWEILSKLKEAGAEGILVLPIEKIVK.

The protein belongs to the ATP phosphoribosyltransferase family. Long subfamily. Requires Mg(2+) as cofactor.

It localises to the cytoplasm. It catalyses the reaction 1-(5-phospho-beta-D-ribosyl)-ATP + diphosphate = 5-phospho-alpha-D-ribose 1-diphosphate + ATP. It functions in the pathway amino-acid biosynthesis; L-histidine biosynthesis; L-histidine from 5-phospho-alpha-D-ribose 1-diphosphate: step 1/9. With respect to regulation, feedback inhibited by histidine. Functionally, catalyzes the condensation of ATP and 5-phosphoribose 1-diphosphate to form N'-(5'-phosphoribosyl)-ATP (PR-ATP). Has a crucial role in the pathway because the rate of histidine biosynthesis seems to be controlled primarily by regulation of HisG enzymatic activity. This Cytophaga hutchinsonii (strain ATCC 33406 / DSM 1761 / CIP 103989 / NBRC 15051 / NCIMB 9469 / D465) protein is ATP phosphoribosyltransferase.